Consider the following 269-residue polypeptide: MHPMLNIAIRAIRKGGNIIVQNYDTQKFIKEDLDKKKIFIKNIMYKTYRIISEVIYKSYPNHIILNKNTDLIKNEKNTLWIINELDGKNNFIKNFPHFCISIAVIMKNNTEISVIYDPIRNDLFTAVKGQGSQLNGYRIRCNNINSLNYSTIAINLPLKHYAKSLFYLKIYKKLILSGISLRCTGSTLLDLAYVASGRIDCLFDFNPQSINLIAGKLQAREAGCLTSKFTENSEKKSEKGNFCTSNLTSSSKFMRLITEKISQCYSFNN.

Residue 85 to 88 participates in substrate binding; sequence LDGK.

This sequence belongs to the inositol monophosphatase superfamily. Homodimer. The rRNA transcription and antitermination complex (rrnTAC) consists of RNA polymerase (RNAP), NusA, NusB, NusE (rpsJ), NusG, SubB, ribosomal protein S4, DNA and precursor rRNA; S4 is more flexible than other subunits. The cofactor is Mg(2+).

The protein localises to the cytoplasm. It carries out the reaction a myo-inositol phosphate + H2O = myo-inositol + phosphate. Part of the processive rRNA transcription and antitermination complex (rrnTAC). The complex forms an RNA-chaperone ring around the RNA exit tunnel of RNA polymerase (RNAP). It supports rapid transcription and antitermination of rRNA operons, cotranscriptional rRNA folding, and annealing of distal rRNA regions to allow correct ribosome biogenesis. This subunit may play a central role in organizing the structure. The chain is Nus factor SuhB (suhB) from Buchnera aphidicola subsp. Schizaphis graminum (strain Sg).